The following is a 109-amino-acid chain: Nucleoid-associated protein HD_0326 (109 aa).

Belongs to the YbaB/EbfC family. Homodimer.

The protein localises to the cytoplasm. Its subcellular location is the nucleoid. In terms of biological role, binds to DNA and alters its conformation. May be involved in regulation of gene expression, nucleoid organization and DNA protection. The polypeptide is Nucleoid-associated protein HD_0326 (Haemophilus ducreyi (strain 35000HP / ATCC 700724)).